We begin with the raw amino-acid sequence, 195 residues long: Auxin-responsive protein IAA14 (195 aa).

2 disordered regions span residues 1–61 (MAAE…SPAS) and 85–107 (STAA…NKGG). The short motif at 10-14 (LRLGL) is the EAR-like (transcriptional repression) element. Positions 108-191 (GLYVKVSMDG…SCKKLRIMRG (84 aa)) constitute a PB1 domain.

It belongs to the Aux/IAA family. As to quaternary structure, homodimers and heterodimers. As to expression, highly expressed in flowers. Expressed in etiolated seedlings.

The protein resides in the nucleus. Functionally, aux/IAA proteins are short-lived transcriptional factors that function as repressors of early auxin response genes at low auxin concentrations. The polypeptide is Auxin-responsive protein IAA14 (IAA14) (Oryza sativa subsp. japonica (Rice)).